Consider the following 177-residue polypeptide: Large ribosomal subunit protein uL30 (177 aa).

The protein belongs to the universal ribosomal protein uL30 family. In terms of assembly, part of the 50S ribosomal subunit.

This Pyrobaculum islandicum (strain DSM 4184 / JCM 9189 / GEO3) protein is Large ribosomal subunit protein uL30.